The following is a 298-amino-acid chain: Transcription factor bHLH114 (298 aa).

Residues 117–149 (LDHEIRNHKSSKEQITQDYKNLTSKRSEELEEN) adopt a coiled-coil conformation. Positions 126–154 (SSKEQITQDYKNLTSKRSEELEENSDEYS) are disordered. Residues 129-140 (EQITQDYKNLTS) show a composition bias toward polar residues. In terms of domain architecture, bHLH spans 163 to 212 (LETLSPLPSFKVRKEKLGDRITALQQLVSPFGKTDTASVLNEAVEYIKFL).

Homodimer. Differentiating root endodermis.

It is found in the nucleus. This is Transcription factor bHLH114 (BHLH114) from Arabidopsis thaliana (Mouse-ear cress).